A 303-amino-acid chain; its full sequence is Phospholipase A1 2 (303 aa).

A disulfide bridge connects residues cysteine 6 and cysteine 90. Serine 140 (nucleophile) is an active-site residue. Aspartate 168 (charge relay system) is an active-site residue. A disulfide bridge links cysteine 179 with cysteine 184. The active-site Charge relay system is histidine 232. Disulfide bonds link cysteine 247-cysteine 271, cysteine 248-cysteine 296, and cysteine 264-cysteine 269.

It belongs to the AB hydrolase superfamily. Lipase family. In terms of tissue distribution, expressed by the venom gland.

Its subcellular location is the secreted. The catalysed reaction is a 1,2-diacyl-sn-glycero-3-phosphocholine + H2O = a 2-acyl-sn-glycero-3-phosphocholine + a fatty acid + H(+). Functionally, catalyzes the hydrolysis of phosphatidylcholine with phospholipase A1 activity. May act as an allergen and induce hemolytic activity. This is Phospholipase A1 2 from Dolichovespula maculata (Bald-faced hornet).